The sequence spans 170 residues: Adenine phosphoribosyltransferase (170 aa).

Belongs to the purine/pyrimidine phosphoribosyltransferase family. In terms of assembly, homodimer.

The protein localises to the cytoplasm. The enzyme catalyses AMP + diphosphate = 5-phospho-alpha-D-ribose 1-diphosphate + adenine. The protein operates within purine metabolism; AMP biosynthesis via salvage pathway; AMP from adenine: step 1/1. In terms of biological role, catalyzes a salvage reaction resulting in the formation of AMP, that is energically less costly than de novo synthesis. The polypeptide is Adenine phosphoribosyltransferase (Fusobacterium nucleatum subsp. nucleatum (strain ATCC 25586 / DSM 15643 / BCRC 10681 / CIP 101130 / JCM 8532 / KCTC 2640 / LMG 13131 / VPI 4355)).